A 572-amino-acid chain; its full sequence is Proline--tRNA ligase (572 aa).

This sequence belongs to the class-II aminoacyl-tRNA synthetase family. ProS type 1 subfamily. Homodimer.

Its subcellular location is the cytoplasm. It catalyses the reaction tRNA(Pro) + L-proline + ATP = L-prolyl-tRNA(Pro) + AMP + diphosphate. Its function is as follows. Catalyzes the attachment of proline to tRNA(Pro) in a two-step reaction: proline is first activated by ATP to form Pro-AMP and then transferred to the acceptor end of tRNA(Pro). As ProRS can inadvertently accommodate and process non-cognate amino acids such as alanine and cysteine, to avoid such errors it has two additional distinct editing activities against alanine. One activity is designated as 'pretransfer' editing and involves the tRNA(Pro)-independent hydrolysis of activated Ala-AMP. The other activity is designated 'posttransfer' editing and involves deacylation of mischarged Ala-tRNA(Pro). The misacylated Cys-tRNA(Pro) is not edited by ProRS. This Yersinia enterocolitica serotype O:8 / biotype 1B (strain NCTC 13174 / 8081) protein is Proline--tRNA ligase.